Consider the following 220-residue polypeptide: Glutathione S-transferase U26 (220 aa).

The GST N-terminal domain maps to 4–83 (DQVILLDYWP…YIDEVWSDAS (80 aa)). Residues 14 to 15 (SM), 40 to 41 (VK), 54 to 55 (KI), and 67 to 68 (ES) each bind glutathione. Positions 89-210 (DPYQKSRARF…ADSDRIIEYV (122 aa)) constitute a GST C-terminal domain.

This sequence belongs to the GST superfamily. Tau family.

It localises to the cytoplasm. It is found in the cytosol. The enzyme catalyses RX + glutathione = an S-substituted glutathione + a halide anion + H(+). Its function is as follows. In vitro, possesses glutathione S-transferase activity toward 1-chloro-2,4-dinitrobenzene (CDNB). May be involved in the conjugation of reduced glutathione to a wide number of exogenous and endogenous hydrophobic electrophiles and have a detoxification role against certain herbicides. This is Glutathione S-transferase U26 (GSTU26) from Arabidopsis thaliana (Mouse-ear cress).